The primary structure comprises 324 residues: Aldo-keto reductase family 1 member C15 (324 aa).

NADP(+)-binding positions include 24-26 (TFA) and D51. The Proton donor role is filled by Y56. H118 serves as a coordination point for substrate. NADP(+) contacts are provided by residues 167–168 (SN), Q191, 217–225 (YSALGSHRD), and 269–281 (LAKS…IKEN).

Belongs to the aldo/keto reductase family. In terms of assembly, monomer. As to expression, expressed in lung, specifically in bronchiolar club cells, type II alveolar cells and epithelial cells of the duct of the bronchial gland (at protein level). Expressed in gastric parietal cells and in epithelial cells of the large intestine and colon (at protein level). Expressed in brown adipocytes (at protein level). Expressed in vascular endothelial cells (at protein level).

It localises to the cytoplasm. The catalysed reaction is (2E,6E)-farnesol + NADP(+) = (2E,6E)-farnesal + NADPH + H(+). With respect to regulation, the dehydrogenase activity is inhibited by 3',3'',5',5''-tetraiodophenolphthalein, phenolphthalein, genistein, quercetin, zearalenone and diethylstilbestrol. Catalyzes the NADPH-dependent reduction of a variety of substrates including aromatic and aliphatic aldehydes, quinones, ketones, dicarbonyl compounds and 17-ketosteroids. Catalyzes the NADP(+)-dependent oxidation of aromatic, alicyclic and aliphatic alcohols, and 17beta-hydroxysteroids. To a lesser extent, can also catalyze the reduction of some aldoses and ketoses and the oxidation of some sugar alcohols. In the stomach, lung and colon tissues, mediates the reduction of farnesal and geranylgeranial into farnesol and geranylgeraniol respectively. By reducing 4-hydroxy-2-nonenal (HNE), produced during lipid peroxidation, into 1,4-dihydro-2-nonene (DHN), protects vascular endothelial cells from damage elicited by oxidized lipoproteins. This Rattus norvegicus (Rat) protein is Aldo-keto reductase family 1 member C15.